The primary structure comprises 255 residues: Putative ankyrin repeat protein R880 (255 aa).

5 ANK repeats span residues 79 to 109 (SGIN…DIHY), 110 to 139 (KTDY…NINT), 141 to 169 (DCYA…NVRK), 171 to 199 (RDLA…DVRS), and 201 to 229 (KNYA…NFRV).

The protein is Putative ankyrin repeat protein R880 of Acanthamoeba polyphaga (Amoeba).